The chain runs to 446 residues: MENILDLWNKALQKIETKLSKPSFETWMKSTKAHSLQGDTLTITAPNEFARDWLESRYLHLIADTIYELTGEELSIKFIIPQNQDEVEAMPKSPIKKMSKEDPVDIPQNMLNPKYTFDTFVIGSGNRFAHAASLAVAEAPAKAYNPLFIYGGVGLGKTHLMHAIGHYVIDHNPSAKVVYLSSEKFTNEFINSIRDNKAVDFRNRYRNVDVLLIDDIQFLAGKEQTQEEFFHTFNTLHEESKQIVISSDRPPKEIPTLEDRLRSRFEWGLITDITPPDLETRIAILRKKAKAEGLDIPNEVMLYIANQIDSNIRELEGALIRVVAYSSLINKDINADLAAEALKDIIPSSKPRVITIKDIQRIVGQQFNIRLEDFKAKKRTKSVAYPRQIAMYLSREMTDSSLPKIGEEFGGRDHTTVIHAHEKISKLMVEDEQLQQHVKEIKEQLK.

Positions 1 to 72 (MENILDLWNK…ADTIYELTGE (72 aa)) are domain I, interacts with DnaA modulators. Residues 72–109 (EELSIKFIIPQNQDEVEAMPKSPIKKMSKEDPVDIPQN) form a domain II region. A domain III, AAA+ region region spans residues 110–326 (MLNPKYTFDT…GALIRVVAYS (217 aa)). Residues G154, G156, K157, and T158 each coordinate ATP. Residues 327 to 446 (SLINKDINAD…HVKEIKEQLK (120 aa)) are domain IV, binds dsDNA.

The protein belongs to the DnaA family. Oligomerizes as a right-handed, spiral filament on DNA at oriC.

The protein localises to the cytoplasm. Plays an essential role in the initiation and regulation of chromosomal replication. ATP-DnaA binds to the origin of replication (oriC) to initiate formation of the DNA replication initiation complex once per cell cycle. Binds the DnaA box (a 9 base pair repeat at the origin) and separates the double-stranded (ds)DNA. Forms a right-handed helical filament on oriC DNA; dsDNA binds to the exterior of the filament while single-stranded (ss)DNA is stabiized in the filament's interior. The ATP-DnaA-oriC complex binds and stabilizes one strand of the AT-rich DNA unwinding element (DUE), permitting loading of DNA polymerase. After initiation quickly degrades to an ADP-DnaA complex that is not apt for DNA replication. Binds acidic phospholipids. This Bacillus pumilus (strain SAFR-032) protein is Chromosomal replication initiator protein DnaA.